Here is a 496-residue protein sequence, read N- to C-terminus: Pseudooxynicotine dehydrogenase (496 aa).

Residues M1–A42 constitute a signal peptide (tat-type signal). FAD contacts are provided by A69, E88, R96, W113, V285, S461, and I471.

This sequence belongs to the flavin monoamine oxidase family. In terms of assembly, homodimer. It depends on FAD as a cofactor. In terms of processing, predicted to be exported by the Tat system. The position of the signal peptide cleavage has not been experimentally proven.

The protein resides in the periplasm. The enzyme catalyses pseudooxynicotine + 2 Fe(III)-[cytochrome c] + H2O = 4-oxo-4-(pyridin-3-yl)butanal + methylamine + 2 Fe(II)-[cytochrome c] + 2 H(+). It participates in alkaloid degradation; nicotine degradation. With respect to regulation, strongly inhibited by Na(2)MoO(4) and FeCl(3). Activity is nearly twice as high in the presence of Na(2)WO(4). In terms of biological role, involved in nicotine degradation. Catalyzes the deamination of pseudooxynicotine to 3-succinoylsemialdehyde-pyridine. Functions as a dehydrogenase that uses the c-type cytochrome protein CycN as the physiological electron acceptor. O(2) is a poor electron acceptor. Pnao is oxidized by CycN 230 times faster than O(2) at equivalent oxidant concentrations. The polypeptide is Pseudooxynicotine dehydrogenase (Pseudomonas putida (strain DSM 28022 / S16)).